We begin with the raw amino-acid sequence, 295 residues long: Myosin light chain kinase A (295 aa).

A Protein kinase domain is found at 8 to 265 (YEFKEELGRG…ATNALNHPWL (258 aa)). Residues 14 to 22 (LGRGAFSIV) and Lys-37 contribute to the ATP site. Asp-130 (proton acceptor) is an active-site residue. Phosphothreonine is present on residues Thr-166 and Thr-289. The segment at 264-295 (WLKSNNSNNTIDTVKMKEYIVERQKTQTKLVN) is autoinhibitory domain.

Belongs to the protein kinase superfamily. CAMK Ser/Thr protein kinase family. CaMK subfamily. Autophosphorylated. Transiently phosphorylated on Thr-166 and Thr-289. This phosphorylation is gbpC-dependent.

The enzyme catalyses L-seryl-[myosin light chain] + ATP = O-phospho-L-seryl-[myosin light chain] + ADP + H(+). It catalyses the reaction L-threonyl-[myosin light chain] + ATP = O-phospho-L-threonyl-[myosin light chain] + ADP + H(+). With respect to regulation, possesses an autoinhibitory domain. Autophosphorylation appears to increase the enzymatic activity. Activation is gbdC-dependent. Does not have a calmodulin-binding domain. Its function is as follows. Phosphorylates a specific serine in the N-terminus of a myosin light chain. Phosphorylates regulatory myosin light chain (mlcR) during chemotaxis. mlcR phosphorylation increases the motility and actin-activated ATPase activity of myosin, contributing to chemotaxis. This is Myosin light chain kinase A (mlkA) from Dictyostelium discoideum (Social amoeba).